The chain runs to 721 residues: Polyphosphate kinase (721 aa).

ATP is bound at residue N54. Mg(2+) contacts are provided by R379 and R409. The PLD phosphodiesterase domain maps to T434–T468. The active-site Phosphohistidine intermediate is H439. Positions 472, 568, and 596 each coordinate ATP.

Belongs to the polyphosphate kinase 1 (PPK1) family. The cofactor is Mg(2+). In terms of processing, an intermediate of this reaction is the autophosphorylated ppk in which a phosphate is covalently linked to a histidine residue through a N-P bond.

It carries out the reaction [phosphate](n) + ATP = [phosphate](n+1) + ADP. Its function is as follows. Catalyzes the reversible transfer of the terminal phosphate of ATP to form a long-chain polyphosphate (polyP). The protein is Polyphosphate kinase of Staphylococcus haemolyticus (strain JCSC1435).